Here is a 207-residue protein sequence, read N- to C-terminus: MNELSKIEQAIEDLRNGKLIIVADDADREAEGDLVGLSEFVTPEKVNFMTKYGRGLICVPITEERALELDLHAMATNNTDTYGTQFTVSVDYYTNSTGISTADRADTIRALAEPLSKAADFKRPGHMFPLIAKNAGVLERRGHTEAAVDLARLSNSIPSAYICEILNDDGTMARYPALETLAKDWDLTLITVEDLVQYREKEIAIEN.

D-ribulose 5-phosphate contacts are provided by residues 28–29 (RE), aspartate 33, 140–144 (RRGHT), and glutamate 164. Glutamate 29 is a binding site for Mg(2+). Histidine 143 is a binding site for Mg(2+).

This sequence belongs to the DHBP synthase family. In terms of assembly, homodimer. Requires Mg(2+) as cofactor. Mn(2+) is required as a cofactor.

The enzyme catalyses D-ribulose 5-phosphate = (2S)-2-hydroxy-3-oxobutyl phosphate + formate + H(+). The protein operates within cofactor biosynthesis; riboflavin biosynthesis; 2-hydroxy-3-oxobutyl phosphate from D-ribulose 5-phosphate: step 1/1. Catalyzes the conversion of D-ribulose 5-phosphate to formate and 3,4-dihydroxy-2-butanone 4-phosphate. In Oceanobacillus iheyensis (strain DSM 14371 / CIP 107618 / JCM 11309 / KCTC 3954 / HTE831), this protein is 3,4-dihydroxy-2-butanone 4-phosphate synthase.